Consider the following 106-residue polypeptide: Large ribosomal subunit protein uL24 (106 aa).

The protein belongs to the universal ribosomal protein uL24 family. In terms of assembly, part of the 50S ribosomal subunit.

Its function is as follows. One of two assembly initiator proteins, it binds directly to the 5'-end of the 23S rRNA, where it nucleates assembly of the 50S subunit. Functionally, one of the proteins that surrounds the polypeptide exit tunnel on the outside of the subunit. This Thermosipho melanesiensis (strain DSM 12029 / CIP 104789 / BI429) protein is Large ribosomal subunit protein uL24.